An 85-amino-acid polypeptide reads, in one-letter code: YcgL domain-containing protein ECA2367 (85 aa).

Residues 1–85 enclose the YcgL domain; the sequence is MFCVIYRSVK…PVESLLTTPV (85 aa).

This Pectobacterium atrosepticum (strain SCRI 1043 / ATCC BAA-672) (Erwinia carotovora subsp. atroseptica) protein is YcgL domain-containing protein ECA2367.